A 294-amino-acid chain; its full sequence is MRTEYAARLPVDWRDYVELCKPRVVLLMLLTVIVGMYLAAPGWVSLRLIAFTLLGIGLCAGSAAAINHLVDRHIDSIMARTKKRPVAYGRVSVKQALWFAVIIGLMGLSLLILFVNQLTALLTFVTLIGYAGVYTGYLKRATSQNIVIGGLAGAAPPLLGWTAVTGQLDPQALLLVLIIFTWTPPHFWALAIYRYKEYQDAEIPMLPVTHGIQFTKLNIYLYTVLLLVVSLLPFVVSMSGWIYLLGALVLGIRFLVWAHKLYFTDKPVVAMQTFRFSILYLMLLFVFLLVDHYF.

9 consecutive transmembrane segments (helical) span residues 24–44 (VVLLMLLTVIVGMYLAAPGWV), 48–68 (LIAFTLLGIGLCAGSAAAINH), 96–116 (ALWFAVIIGLMGLSLLILFVN), 118–138 (LTALLTFVTLIGYAGVYTGYL), 146–166 (IVIGGLAGAAPPLLGWTAVTG), 172–192 (ALLLVLIIFTWTPPHFWALAI), 224–244 (VLLLVVSLLPFVVSMSGWIYL), 245–265 (LGALVLGIRFLVWAHKLYFTD), and 268–288 (VVAMQTFRFSILYLMLLFVFL).

It belongs to the UbiA prenyltransferase family. Protoheme IX farnesyltransferase subfamily.

Its subcellular location is the cell inner membrane. The enzyme catalyses heme b + (2E,6E)-farnesyl diphosphate + H2O = Fe(II)-heme o + diphosphate. The protein operates within porphyrin-containing compound metabolism; heme O biosynthesis; heme O from protoheme: step 1/1. Converts heme B (protoheme IX) to heme O by substitution of the vinyl group on carbon 2 of heme B porphyrin ring with a hydroxyethyl farnesyl side group. This chain is Protoheme IX farnesyltransferase, found in Legionella pneumophila (strain Paris).